Consider the following 403-residue polypeptide: RILP-like protein 1 (403 aa).

S7 is modified (phosphoserine). Positions 10–97 (AAESALEKNV…RLERMDRIEK (88 aa)) constitute an RH1 domain. The residue at position 47 (C47) is an S-nitrosocysteine. A coiled-coil region spans residues 76–258 (ELDELRLELD…KLRERLQGEH (183 aa)). 3 disordered regions span residues 254-275 (LQGEHSQNGEEEPETEPVGEES), 327-352 (EMEEENRIPQPPPIAHPRTSPQPESG), and 384-403 (ANTHRDDGYTEQGQEALQHL). A Phosphoserine modification is found at S259. Residues 262–275 (GEEEPETEPVGEES) are compositionally biased toward acidic residues. The 66-residue stretch at 291 to 356 (RPRFTLQELR…PQPESGIKRL (66 aa)) folds into the RH2 domain. Residues 394 to 403 (EQGQEALQHL) show a composition bias toward polar residues.

This sequence belongs to the RILPL family. In terms of assembly, interacts (when S-nitrosylated) with GAPDH. Interacts with RAB8A; interaction is dependent on the phosphorylation of 'Thr-72' of RAB8A. Interacts with RAB10 and RAB12; the interaction is dependent on the phosphorylation of 'Thr-73' of RAB10, and 'Ser-105' of RAB12. Post-translationally, S-nitrosylation is required for the interaction with GAPDH. As to expression, widely expressed. Expressed at lower level in liver and kidney.

It localises to the cytoplasm. The protein resides in the cytosol. Its subcellular location is the cytoskeleton. The protein localises to the microtubule organizing center. It is found in the centrosome. It localises to the centriole. The protein resides in the cilium basal body. Functionally, plays a role in the regulation of cell shape and polarity. Plays a role in cellular protein transport, including protein transport away from primary cilia. Neuroprotective protein, which acts by sequestring GAPDH in the cytosol and prevent the apoptotic function of GAPDH in the nucleus. Competes with SIAH1 for binding GAPDH. Does not regulate lysosomal morphology and distribution. Binds to RAB10 following LRRK2-mediated RAB10 phosphorylation which leads to inhibition of ciliogenesis. This Homo sapiens (Human) protein is RILP-like protein 1 (RILPL1).